Reading from the N-terminus, the 486-residue chain is MIATLLSSLLLTGPISAGAETQGLLPAQDLLPDIGTSAGATLSIDQEMAMGDFYVRQMRASAPLIYDPLLTQYINTLGNRLVANANSVRTPFHFYLVNNDQINAFAFFGGNVVLHSALFRYTDNESELASVLAHEISHVTQRHLARAMEEQQRLAPLTWVGVLGSILLTMASPQAGMAGLSGTLAGAQQGIISFTQGNEQEADRIGIQVLQRSGFDPQAMPNFLQKLADQSRYVSKPPEMLLTHPLPDSRLSDARNRANQMKPHPTASSQDYLFAKMRILGMYGADENSLTPELLDKLSKGTVREQLAAKYGQAVQLYQAKKYDEARNLLQPLLAQQPGNIWFLDLMTDIDLGQNKSAAAIARLQNAMVKQNDEPVLQLNLANAYVQGRQPAAAIKLLHRYTFAYPNDPNGWDLLAQATATQGLRDQELAARAESLALSGKLTQAIGLLSDASARVKLGSLEQARYDARIDQLRRLNERFRKYQKS.

A signal peptide spans 1–19 (MIATLLSSLLLTGPISAGA). Zn(2+) is bound at residue histidine 134. Residue glutamate 135 is part of the active site. The Zn(2+) site is built by histidine 138 and glutamate 199. The Proton donor role is filled by aspartate 203.

The protein belongs to the peptidase M48 family. BepA subfamily. The cofactor is Zn(2+).

The protein localises to the periplasm. In terms of biological role, functions both as a chaperone and a metalloprotease. Maintains the integrity of the outer membrane by promoting either the assembly or the elimination of outer membrane proteins, depending on their folding state. The sequence is that of Beta-barrel assembly-enhancing protease from Yersinia pestis.